A 196-amino-acid chain; its full sequence is Small ribosomal subunit protein uS4c (196 aa).

Residues 17–36 (ALPGLTRKTPKSGSNLKKKF) are disordered. The region spanning 89–157 (MRLDNILFRL…VQNYIASSDP (69 aa)) is the S4 RNA-binding domain.

It belongs to the universal ribosomal protein uS4 family. Part of the 30S ribosomal subunit. Contacts protein S5. The interaction surface between S4 and S5 is involved in control of translational fidelity.

The protein localises to the plastid. It localises to the chloroplast. One of the primary rRNA binding proteins, it binds directly to 16S rRNA where it nucleates assembly of the body of the 30S subunit. Functionally, with S5 and S12 plays an important role in translational accuracy. The protein is Small ribosomal subunit protein uS4c (rps4) of Calamagrostis epigeios (Wood small-reed grass).